We begin with the raw amino-acid sequence, 191 residues long: Protein NUCLEAR FUSION DEFECTIVE 2 (191 aa).

A signal peptide spans Met1 to Ala29. The RNase III domain maps to Leu48–Gly167.

Functionally, required for karyogamy during female gametophyte development, when the two polar nuclei fuse to form the diploid central cell nucleus. This chain is Protein NUCLEAR FUSION DEFECTIVE 2, found in Arabidopsis thaliana (Mouse-ear cress).